We begin with the raw amino-acid sequence, 130 residues long: Ribonuclease pancreatic (130 aa).

Residues 1–6 form the signal peptide; the sequence is VQPSLG. 2 residues coordinate substrate: Lys13 and Arg16. The active-site Proton acceptor is His18. Intrachain disulfides connect Cys32–Cys90, Cys46–Cys101, Cys64–Cys116, and Cys71–Cys78. Residue Asn40 is glycosylated (N-linked (GlcNAc...) asparagine). Substrate-binding positions include 47-51, Lys72, and Arg91; that span reads KPVNT. Catalysis depends on His125, which acts as the Proton donor.

It belongs to the pancreatic ribonuclease family. As to quaternary structure, monomer. Interacts with and forms tight 1:1 complexes with RNH1. Dimerization of two such complexes may occur. Interaction with RNH1 inhibits this protein. In terms of tissue distribution, pancreas.

It is found in the secreted. It carries out the reaction an [RNA] containing cytidine + H2O = an [RNA]-3'-cytidine-3'-phosphate + a 5'-hydroxy-ribonucleotide-3'-[RNA].. The enzyme catalyses an [RNA] containing uridine + H2O = an [RNA]-3'-uridine-3'-phosphate + a 5'-hydroxy-ribonucleotide-3'-[RNA].. In terms of biological role, endonuclease that catalyzes the cleavage of RNA on the 3' side of pyrimidine nucleotides. Acts on single-stranded and double-stranded RNA. This Cricetulus griseus (Chinese hamster) protein is Ribonuclease pancreatic (RNASE1).